The primary structure comprises 499 residues: Hepatic triacylglycerol lipase (499 aa).

The signal sequence occupies residues 1–21 (MGSPLCVPIFLAVCILIQSST). Asn78 carries N-linked (GlcNAc...) asparagine glycosylation. Catalysis depends on Ser168, which acts as the Nucleophile. The active-site Charge relay system is Asp194. The interval 254 to 277 (CHFLELYKHIAQHGLNALSQTIKC) is essential for determining substrate specificity. The Charge relay system role is filled by His279. Positions 352–486 (YHYQFKIQFI…HPTQEKNFVR (135 aa)) constitute a PLAT domain. Asn397 carries N-linked (GlcNAc...) asparagine glycosylation.

This sequence belongs to the AB hydrolase superfamily. Lipase family. Homodimer.

The protein resides in the secreted. It carries out the reaction a triacylglycerol + H2O = a diacylglycerol + a fatty acid + H(+). It catalyses the reaction a 1-acyl-sn-glycero-3-phosphocholine + H2O = sn-glycerol 3-phosphocholine + a fatty acid + H(+). The enzyme catalyses a 1,2-diacyl-sn-glycero-3-phosphocholine + H2O = a 2-acyl-sn-glycero-3-phosphocholine + a fatty acid + H(+). The catalysed reaction is 1,2,3-tri-(9Z-octadecenoyl)-glycerol + H2O = di-(9Z)-octadecenoylglycerol + (9Z)-octadecenoate + H(+). It carries out the reaction 1,2-di-(9Z-octadecenoyl)-sn-glycero-3-phosphocholine + H2O = (9Z-octadecenoyl)-sn-glycero-3-phosphocholine + (9Z)-octadecenoate + H(+). It catalyses the reaction 1,2,3-tributanoylglycerol + H2O = dibutanoylglycerol + butanoate + H(+). The enzyme catalyses 1,2-dihexadecanoyl-sn-glycero-3-phosphocholine + H2O = hexadecanoyl-sn-glycero-3-phosphocholine + hexadecanoate + H(+). The catalysed reaction is 1,2-di-(9Z-octadecenoyl)-sn-glycerol + H2O = 2-(9Z-octadecenoyl)-glycerol + (9Z)-octadecenoate + H(+). It carries out the reaction 1,2,3-tri-(9Z-octadecenoyl)-glycerol + H2O = 2,3-di-(9Z)-octadecenoyl-sn-glycerol + (9Z)-octadecenoate + H(+). It catalyses the reaction 1-(9Z-octadecenoyl)-sn-glycero-3-phospho-L-serine + H2O = sn-glycero-3-phospho-L-serine + (9Z)-octadecenoate + H(+). The enzyme catalyses 1-hexadecanoyl-sn-glycero-3-phosphocholine + H2O = sn-glycerol 3-phosphocholine + hexadecanoate + H(+). The catalysed reaction is 1,3-di-(9Z-octadecenoyl)-glycerol + H2O = 3-(9Z-octadecenoyl)-sn-glycerol + (9Z)-octadecenoate + H(+). Its function is as follows. Catalyzes the hydrolysis of triglycerides and phospholipids present in circulating plasma lipoproteins, including chylomicrons, intermediate density lipoproteins (IDL), low density lipoproteins (LDL) of large size and high density lipoproteins (HDL), releasing free fatty acids (FFA) and smaller lipoprotein particles. Also exhibits lysophospholipase activity. Can hydrolyze both neutral lipid and phospholipid substrates but shows a greater binding affinity for neutral lipid substrates than phospholipid substrates. In native LDL, preferentially hydrolyzes the phosphatidylcholine species containing polyunsaturated fatty acids at sn-2 position. The protein is Hepatic triacylglycerol lipase (LIPC) of Oryctolagus cuniculus (Rabbit).